Here is a 398-residue protein sequence, read N- to C-terminus: Cytochrome b (398 aa).

Residues 45 to 65 (LGSIAGIALVIQIITGVILAM) traverse the membrane as a helical segment. Residues His-95 and His-109 each contribute to the heme b site. The next 9 membrane-spanning stretches (helical) occupy residues 96–116 (AVGA…GLYY), 129–149 (IGII…VLPW), 164–184 (FSAI…GFSV), 192–212 (FFAL…LHLV), 245–265 (FVGF…APNY), 277–297 (PLVT…YAIL), 304–324 (LGGV…PWLD), 339–359 (IAFW…SKPV), and 366–386 (ISRF…PLIG). Residues His-196 and His-210 each contribute to the heme b site.

Belongs to the cytochrome b family. In terms of assembly, the main subunits of complex b-c1 are: cytochrome b, cytochrome c1 and the Rieske protein. It depends on heme b as a cofactor.

The protein localises to the cell membrane. Component of the ubiquinol-cytochrome c reductase complex (complex III or cytochrome b-c1 complex), which is a respiratory chain that generates an electrochemical potential coupled to ATP synthesis. The protein is Cytochrome b (petB) of Rickettsia prowazekii (strain Madrid E).